A 165-amino-acid polypeptide reads, in one-letter code: Small ribosomal subunit protein uS13 (165 aa).

The segment at 139-165 is disordered; it reads GMTIGVARKKAAQPQSQQSSSQQQKSS. Positions 153-165 are enriched in low complexity; it reads QSQQSSSQQQKSS.

This sequence belongs to the universal ribosomal protein uS13 family. As to quaternary structure, part of the 30S ribosomal subunit. Forms a loose heterodimer with protein S19. Forms two bridges to the 50S subunit in the 70S ribosome.

Its function is as follows. Located at the top of the head of the 30S subunit, it contacts several helices of the 16S rRNA. In the 70S ribosome it contacts the 23S rRNA (bridge B1a) and protein L5 of the 50S subunit (bridge B1b), connecting the 2 subunits; these bridges are implicated in subunit movement. The chain is Small ribosomal subunit protein uS13 from Saccharolobus solfataricus (strain ATCC 35092 / DSM 1617 / JCM 11322 / P2) (Sulfolobus solfataricus).